Here is a 192-residue protein sequence, read N- to C-terminus: Protein GrpE (192 aa).

The tract at residues 1–34 (MSSKEQKTPNEQVSEEMENAAEQQVEATQETGEG) is disordered. Residues 21–31 (AEQQVEATQET) are compositionally biased toward polar residues.

The protein belongs to the GrpE family. In terms of assembly, homodimer.

It is found in the cytoplasm. Functionally, participates actively in the response to hyperosmotic and heat shock by preventing the aggregation of stress-denatured proteins, in association with DnaK and GrpE. It is the nucleotide exchange factor for DnaK and may function as a thermosensor. Unfolded proteins bind initially to DnaJ; upon interaction with the DnaJ-bound protein, DnaK hydrolyzes its bound ATP, resulting in the formation of a stable complex. GrpE releases ADP from DnaK; ATP binding to DnaK triggers the release of the substrate protein, thus completing the reaction cycle. Several rounds of ATP-dependent interactions between DnaJ, DnaK and GrpE are required for fully efficient folding. The chain is Protein GrpE from Yersinia enterocolitica serotype O:8 / biotype 1B (strain NCTC 13174 / 8081).